Here is a 149-residue protein sequence, read N- to C-terminus: UPF0756 membrane protein MS1439 (149 aa).

A run of 4 helical transmembrane segments spans residues 10–32 (IMLVVLILLGVLSNNNSITISAL), 56–76 (VGIIILTVGVLAPLVSGKVQL), 82–102 (FLNWQMFLSIVIGIAVAWFAG), and 126–146 (VAFLGGIPVGPLIAAGILAVI).

This sequence belongs to the UPF0756 family.

The protein localises to the cell membrane. In Mannheimia succiniciproducens (strain KCTC 0769BP / MBEL55E), this protein is UPF0756 membrane protein MS1439.